A 441-amino-acid chain; its full sequence is MTAPTAIRRLNAADPDFAHHLDHLLSWESVSDDSVNQRVLDIIKAVRERGDAALVEFTQKFDGLEVASMADLILPRERLELALTRITVAQREALEKAAARVRSYHEKQKQDSWSYTEADGTVLGQKVTPLDRAGLYVPGGKASYPSSVLMNAIPAKVAGVTEVVMVVPTPRGEVNELVLAAACIAGVDRVFTIGGAQAVAALAYGTESVPQVDKVVGPGNIYVATAKRHVFGQVGIDMIAGPSEILVVCDGQTDPDWIAMDLFSQAEHDEDAQAILVSPDAEFLDKVAASIDKLLPTMDRATIIETSINGRGALIHVRDMAQAIEVANRIAPEHLELSVADPQAWLPQIRHAGAIFMGRHTSEALGDYCAGPNHVLPTSGTARFSSPLGVYDFQKRSSIIFCSEAGASELGKTASILARGESLSAHARSAEYRIKDDVKGN.

Residues Y136, Q197, and N220 each contribute to the NAD(+) site. Substrate contacts are provided by S243, Q265, and H268. 2 residues coordinate Zn(2+): Q265 and H268. Catalysis depends on proton acceptor residues E333 and H334. H334, D367, E421, and H426 together coordinate substrate. D367 is a Zn(2+) binding site. H426 provides a ligand contact to Zn(2+).

It belongs to the histidinol dehydrogenase family. Zn(2+) serves as cofactor.

It catalyses the reaction L-histidinol + 2 NAD(+) + H2O = L-histidine + 2 NADH + 3 H(+). It functions in the pathway amino-acid biosynthesis; L-histidine biosynthesis; L-histidine from 5-phospho-alpha-D-ribose 1-diphosphate: step 9/9. In terms of biological role, catalyzes the sequential NAD-dependent oxidations of L-histidinol to L-histidinaldehyde and then to L-histidine. In Pseudomonas fluorescens (strain Pf0-1), this protein is Histidinol dehydrogenase.